The chain runs to 254 residues: Urease accessory protein UreF (254 aa).

Basic and acidic residues predominate over residues 1–11 (MDKGKSVKSTE). A disordered region spans residues 1–25 (MDKGKSVKSTEKSVGIPPKTPKTDN).

Belongs to the UreF family. In terms of assembly, ureH, UreF and UreG form a complex that acts as a GTP-hydrolysis-dependent molecular chaperone, activating the urease apoprotein by helping to assemble the nickel containing metallocenter of UreC. The UreE protein probably delivers the nickel.

Its subcellular location is the cytoplasm. Its function is as follows. Required for maturation of urease via the functional incorporation of the urease nickel metallocenter. The protein is Urease accessory protein UreF of Helicobacter pylori (strain P12).